A 59-amino-acid chain; its full sequence is Large ribosomal subunit protein uL30 (59 aa).

Belongs to the universal ribosomal protein uL30 family. In terms of assembly, part of the 50S ribosomal subunit.

The chain is Large ribosomal subunit protein uL30 from Psychrobacter cryohalolentis (strain ATCC BAA-1226 / DSM 17306 / VKM B-2378 / K5).